Reading from the N-terminus, the 217-residue chain is tRNA (guanine-N(7)-)-methyltransferase (217 aa).

S-adenosyl-L-methionine is bound by residues Glu46, Glu71, Asp98, and Asp120. The active site involves Asp120. Lys124 provides a ligand contact to substrate. The interaction with RNA stretch occupies residues 126–131 (RHEKRR). Substrate is bound by residues Asp156 and 196-199 (TEYE).

It belongs to the class I-like SAM-binding methyltransferase superfamily. TrmB family.

The catalysed reaction is guanosine(46) in tRNA + S-adenosyl-L-methionine = N(7)-methylguanosine(46) in tRNA + S-adenosyl-L-homocysteine. The protein operates within tRNA modification; N(7)-methylguanine-tRNA biosynthesis. In terms of biological role, catalyzes the formation of N(7)-methylguanine at position 46 (m7G46) in tRNA. The protein is tRNA (guanine-N(7)-)-methyltransferase of Lactobacillus gasseri (strain ATCC 33323 / DSM 20243 / BCRC 14619 / CIP 102991 / JCM 1131 / KCTC 3163 / NCIMB 11718 / NCTC 13722 / AM63).